Reading from the N-terminus, the 864-residue chain is N-alpha-acetyltransferase 16, NatA auxiliary subunit (864 aa).

TPR repeat units follow at residues 46–79 (GETLAMKGLILNCLGKREEAYEFVRKGLRSDVRS), 80–113 (HVCWHVYGLLQRSDKKYDEAIKCYRNALKLDKDN), 148–184 (RASWIGYAIAYHLLKDYDTALKLLEEFRQTQQVPPNK), 224–257 (LLVEEIKGEMLLKLGRLKEASEVFRNLIDWNAEN), 374–407 (IWVQYFLAQHYDKLGQYFLALEYINAVIASTPTL), 408–441 (IELFYMKAKIYKHMGNLKEAAQWMDEAQSLDTAD), and 485–514 (MWFETECISAYQRLGRYGDALKKCHEVERH). The interval 594 to 646 (KMLSKQRRAQKKAKVEEERKHTERERQQKNQKKKREEEEEVTSGHKEELIPEK) is disordered. The span at 595–605 (MLSKQRRAQKK) shows a compositional bias: basic residues. 2 stretches are compositionally biased toward basic and acidic residues: residues 606-621 (AKVEEERKHTERERQQ) and 635-646 (TSGHKEELIPEK).

In terms of assembly, component of the N-terminal acetyltransferase A (NatA) complex composed of NAA10 and NAA16. Highest levels in the kidney and testes. Moderate expression in the liver, thymus and skin.

Its function is as follows. Auxillary subunit of the N-terminal acetyltransferase A (NatA) complex which displays alpha (N-terminal) acetyltransferase activity. This chain is N-alpha-acetyltransferase 16, NatA auxiliary subunit (Naa16), found in Mus musculus (Mouse).